We begin with the raw amino-acid sequence, 74 residues long: UPF0435 protein GWCH70_0415 (74 aa).

This sequence belongs to the UPF0435 family.

The chain is UPF0435 protein GWCH70_0415 from Geobacillus sp. (strain WCH70).